Reading from the N-terminus, the 299-residue chain is Small ribosomal subunit protein uS2 (299 aa).

Residues 210 to 299 (AEKEEQTQVV…GAATDNSWAS (90 aa)) are disordered. Positions 275 to 285 (WASTGTATVGP) are enriched in polar residues.

This sequence belongs to the universal ribosomal protein uS2 family. Component of the small ribosomal subunit. Mature ribosomes consist of a small (40S) and a large (60S) subunit. The 40S subunit contains about 33 different proteins and 1 molecule of RNA (18S). The 60S subunit contains about 49 different proteins and 3 molecules of RNA (28S, 5.8S and 5S). Interacts with ribosomal protein S21.

Its subcellular location is the cytoplasm. Required for the assembly and/or stability of the 40S ribosomal subunit. Required for the processing of the 20S rRNA-precursor to mature 18S rRNA in a late step of the maturation of 40S ribosomal subunits. The polypeptide is Small ribosomal subunit protein uS2 (Ornithodoros parkeri (Soft tick)).